The primary structure comprises 662 residues: 72 kDa type IV collagenase (662 aa).

The signal sequence occupies residues 1 to 29 (MEARVAWGALAGPLRVLCVLCCLLGRAIA). The propeptide at 30–109 (APSPIIKFPG…PRCGNPDVAN (80 aa)) is activation peptide. A Cysteine switch motif is present at residues 100–107 (PRCGNPDV). Cysteine 102 lines the Zn(2+) pocket. Residues 110–221 (YNFFPRKPKW…LWTLGEGQVV (112 aa)) are collagenase-like 1. The Ca(2+) site is built by aspartate 134 and aspartate 168. Zn(2+) is bound by residues histidine 178 and aspartate 180. Ca(2+) is bound by residues aspartate 185 and glycine 186. Histidine 193 contacts Zn(2+). 3 residues coordinate Ca(2+): glycine 200, glycine 202, and aspartate 204. Histidine 206 serves as a coordination point for Zn(2+). Ca(2+) is bound by residues aspartate 208, aspartate 209, and glutamate 211. The segment at 222-396 (RVKYGNADGE…WGFCPDQGYS (175 aa)) is collagen-binding. Fibronectin type-II domains are found at residues 228–276 (ADGE…FCPH), 286–334 (ADGQ…FCPE), and 344–392 (SEGA…FCPD). 6 disulfide bridges follow: cysteine 233-cysteine 259, cysteine 247-cysteine 274, cysteine 291-cysteine 317, cysteine 305-cysteine 332, cysteine 349-cysteine 375, and cysteine 363-cysteine 390. Positions 397–467 (LFLVAAHEFG…GPTPTLGPVT (71 aa)) are collagenase-like 2. Histidine 403 provides a ligand contact to Zn(2+). Glutamate 404 is a catalytic residue. Zn(2+)-binding residues include histidine 407 and histidine 413. A required for inhibitor TIMP2 binding region spans residues 414–662 (SQDPGALMAP…GSIKSDWLGC (249 aa)). A disordered region spans residues 446 to 465 (GPSPDADTDTGTGPTPTLGP). An intrachain disulfide couples cysteine 471 to cysteine 662. Hemopexin repeat units follow at residues 474–518 (DIVF…WPEL), 519–565 (PEKI…GLPP), 567–615 (VQQV…WNAI), and 616–662 (PDNL…WLGC). Aspartate 478, aspartate 523, and aspartate 571 together coordinate Ca(2+). The N-linked (GlcNAc...) asparagine glycan is linked to asparagine 575. Aspartate 620 is a binding site for Ca(2+). An N-linked (GlcNAc...) asparagine glycan is attached at asparagine 644.

The protein belongs to the peptidase M10A family. In terms of assembly, interacts (via the C-terminal hemopexin-like domains-containing region) with the integrin alpha-V/beta-3; the interaction promotes vascular invasion in angiogenic vessels and melamoma cells. Interacts (via the C-terminal PEX domain) with TIMP2 (via the C-terminal); the interaction inhibits the degradation activity. Interacts with GSK3B. Ca(2+) serves as cofactor. Zn(2+) is required as a cofactor. Phosphorylation on multiple sites modulates enzymatic activity. Phosphorylated by PKC in vitro. In terms of processing, the propeptide is processed by MMP14 (MT-MMP1) and MMP16 (MT-MMP3). Autocatalytic cleavage in the C-terminal produces the anti-angiogenic peptide, PEX. This processing appears to be facilitated by binding integrinv/beta3.

The protein resides in the secreted. It is found in the extracellular space. The protein localises to the extracellular matrix. Its subcellular location is the membrane. It localises to the nucleus. The protein resides in the cytoplasm. It is found in the mitochondrion. It catalyses the reaction Cleavage of gelatin type I and collagen types IV, V, VII, X. Cleaves the collagen-like sequence Pro-Gln-Gly-|-Ile-Ala-Gly-Gln.. Functionally, ubiquitinous metalloproteinase that is involved in diverse functions such as remodeling of the vasculature, angiogenesis, tissue repair, tumor invasion, inflammation, and atherosclerotic plaque rupture. As well as degrading extracellular matrix proteins, can also act on several nonmatrix proteins such as big endothelial 1 and beta-type CGRP promoting vasoconstriction. Also cleaves KISS at a Gly-|-Leu bond. Appears to have a role in myocardial cell death pathways. Contributes to myocardial oxidative stress by regulating the activity of GSK3beta. Cleaves GSK3beta in vitro. Involved in the formation of the fibrovascular tissues. In terms of biological role, PEX, the C-terminal non-catalytic fragment of MMP2, possesses anti-angiogenic and anti-tumor properties and inhibits cell migration and cell adhesion to FGF2 and vitronectin. Ligand for integrin alpha-v/beta-3 on the surface of blood vessels. Mediates the proteolysis of CHUK/IKKA and initiates a primary innate immune response by inducing mitochondrial-nuclear stress signaling with activation of the pro-inflammatory NF-kappaB, NFAT and IRF transcriptional pathways. The polypeptide is 72 kDa type IV collagenase (Mmp2) (Mus musculus (Mouse)).